Reading from the N-terminus, the 217-residue chain is 3,4-dihydroxy-2-butanone 4-phosphate synthase (217 aa).

D-ribulose 5-phosphate-binding positions include 37-38, Asp-42, 150-154, and Glu-174; these read RE and RGGHT. Glu-38 lines the Mg(2+) pocket. Position 153 (His-153) interacts with Mg(2+).

It belongs to the DHBP synthase family. In terms of assembly, homodimer. Mg(2+) serves as cofactor. Requires Mn(2+) as cofactor.

It carries out the reaction D-ribulose 5-phosphate = (2S)-2-hydroxy-3-oxobutyl phosphate + formate + H(+). The protein operates within cofactor biosynthesis; riboflavin biosynthesis; 2-hydroxy-3-oxobutyl phosphate from D-ribulose 5-phosphate: step 1/1. Its function is as follows. Catalyzes the conversion of D-ribulose 5-phosphate to formate and 3,4-dihydroxy-2-butanone 4-phosphate. The polypeptide is 3,4-dihydroxy-2-butanone 4-phosphate synthase (Shigella boydii serotype 18 (strain CDC 3083-94 / BS512)).